A 125-amino-acid chain; its full sequence is Fluoride-specific ion channel FluC (125 aa).

4 helical membrane-spanning segments follow: residues 1–21, 34–54, 72–92, and 101–121; these read MFATFGFIALFAVLGAWARYG, FPWATLSINVLGCFLMGFLFF, TGGLGAYTTFSTFSLETLVLF, and LLYMFTSLFLCVGAAFAGAWI. Na(+)-binding residues include glycine 76 and threonine 79.

This sequence belongs to the fluoride channel Fluc/FEX (TC 1.A.43) family.

Its subcellular location is the cell inner membrane. It catalyses the reaction fluoride(in) = fluoride(out). Na(+) is not transported, but it plays an essential structural role and its presence is essential for fluoride channel function. Fluoride-specific ion channel. Important for reducing fluoride concentration in the cell, thus reducing its toxicity. The protein is Fluoride-specific ion channel FluC of Acidithiobacillus ferrooxidans (strain ATCC 23270 / DSM 14882 / CIP 104768 / NCIMB 8455) (Ferrobacillus ferrooxidans (strain ATCC 23270)).